The following is a 380-amino-acid chain: MEEIYAKFVSQKISKTRWRPVPSGSLQTTETFATGSWDNEENCVSLWSIGDFGNLDSDGGFEGDHQLLCDIRHHGDVMDLQFFDQERIVAASSTGCVTVFLHHPNNQTLSVNQQWPAAHYHTGPSSPSYSSAPCTGIVCDNPEIVTVGEDGRINLFRVDHKEAVRTIDNADSSTLHAVTFLRTPEIVTVNSIGQLKIWDFRQQGSEPCQILSLTGDRVPLHCVDRHPDQQHVVATGGQDGMLSIWDVRQGTMPVSLLKAHEAEMWEVHFHPSNPDHLFTCSEDGSLWHWDASTDAPEKSSLFHQGGRSSTFLSHSLSNQAGVHQSLVSSWLSTDPAKDRIEITSLLPSRTLSVNSLDVLGPCLVCGTDAEAIYVTRQLFS.

N-acetylmethionine is present on Met-1. 6 WD repeats span residues 8–57 (FVSQ…NLDS), 72–110 (RHHG…QTLS), 119–166 (HYHT…AVRT), 170–208 (ADSS…SEPC), 215–255 (GDRV…MPVS), and 259–299 (AHEA…PEKS).

In terms of assembly, component of the Nup107-160 subcomplex of the nuclear pore complex (NPC). The Nup107-160 subcomplex includes NUP160, NUP133, NUP107, NUP98, NUP85, NUP43, NUP37, SEH1 and SEC13.

Its subcellular location is the chromosome. It is found in the centromere. The protein localises to the kinetochore. The protein resides in the nucleus. It localises to the nuclear pore complex. In terms of biological role, component of the Nup107-160 subcomplex of the nuclear pore complex (NPC). The Nup107-160 subcomplex is required for the assembly of a functional NPC. The Nup107-160 subcomplex is also required for normal kinetochore microtubule attachment, mitotic progression and chromosome segregation. In Mus musculus (Mouse), this protein is Nucleoporin Nup43 (Nup43).